We begin with the raw amino-acid sequence, 832 residues long: Alpha-glucan phosphorylase, H isozyme (832 aa).

K678 is modified (N6-(pyridoxal phosphate)lysine).

It belongs to the glycogen phosphorylase family. It depends on pyridoxal 5'-phosphate as a cofactor.

It is found in the cytoplasm. It catalyses the reaction [(1-&gt;4)-alpha-D-glucosyl](n) + phosphate = [(1-&gt;4)-alpha-D-glucosyl](n-1) + alpha-D-glucose 1-phosphate. Phosphorylase is an important allosteric enzyme in carbohydrate metabolism. Enzymes from different sources differ in their regulatory mechanisms and in their natural substrates. However, all known phosphorylases share catalytic and structural properties. The sequence is that of Alpha-glucan phosphorylase, H isozyme from Triticum aestivum (Wheat).